Reading from the N-terminus, the 890-residue chain is Alanine--tRNA ligase (890 aa).

Residues histidine 578, histidine 582, cysteine 689, and histidine 693 each contribute to the Zn(2+) site.

Belongs to the class-II aminoacyl-tRNA synthetase family. Zn(2+) is required as a cofactor.

It localises to the cytoplasm. The catalysed reaction is tRNA(Ala) + L-alanine + ATP = L-alanyl-tRNA(Ala) + AMP + diphosphate. Catalyzes the attachment of alanine to tRNA(Ala) in a two-step reaction: alanine is first activated by ATP to form Ala-AMP and then transferred to the acceptor end of tRNA(Ala). Also edits incorrectly charged Ser-tRNA(Ala) and Gly-tRNA(Ala) via its editing domain. In Deinococcus radiodurans (strain ATCC 13939 / DSM 20539 / JCM 16871 / CCUG 27074 / LMG 4051 / NBRC 15346 / NCIMB 9279 / VKM B-1422 / R1), this protein is Alanine--tRNA ligase.